A 210-amino-acid polypeptide reads, in one-letter code: Thymidylate kinase (210 aa).

Gly13–Ser20 lines the ATP pocket.

This sequence belongs to the thymidylate kinase family.

It catalyses the reaction dTMP + ATP = dTDP + ADP. In terms of biological role, phosphorylation of dTMP to form dTDP in both de novo and salvage pathways of dTTP synthesis. This Shewanella loihica (strain ATCC BAA-1088 / PV-4) protein is Thymidylate kinase.